Here is a 203-residue protein sequence, read N- to C-terminus: MIKGYEEEEWIPKTRLGRLVYEGQVTTFEEAVRSGLPIKEHQIIDLLLPGLEDEVLDITMVQRMTDSGRRVKFRTTVIVGNRDGYIGIGHGKDVQVGGAIKKGIENAKLNVVRINRGCGSWECGCGQAHTVPYKVSGSSGSVRIYLMPAPRGLGLAAGDVAKKVMEMAGIKDVWTRTEGSTRTTLNFAKATYNALLNTITVRS.

In terms of domain architecture, S5 DRBM spans 51–114 (LEDEVLDITM…ENAKLNVVRI (64 aa)).

It belongs to the universal ribosomal protein uS5 family. As to quaternary structure, part of the 30S ribosomal subunit. Contacts protein S4.

Its function is as follows. With S4 and S12 plays an important role in translational accuracy. This chain is Small ribosomal subunit protein uS5, found in Methanothrix thermoacetophila (strain DSM 6194 / JCM 14653 / NBRC 101360 / PT) (Methanosaeta thermophila).